A 93-amino-acid polypeptide reads, in one-letter code: Alpha-defensin 5 (93 aa).

An N-terminal signal peptide occupies residues 1–19 (MKTFVLLSALVLLAFQVQA). The propeptide occupies 20-58 (DPIHKTDEETNTEEQPGEEDQAVSISFGGQEGSALHEEL). Intrachain disulfides connect C64/C92, C66/C81, and C71/C91.

The protein belongs to the alpha-defensin family.

The protein resides in the secreted. Probably contributes to the antimicrobial barrier function of the small bowel mucosa. The chain is Alpha-defensin 5 (Defa5) from Mus musculus (Mouse).